Consider the following 1233-residue polypeptide: Reverse gyrase 2 (1233 aa).

An RG N-terminal-type zinc finger spans residues 1-41 (MNTIPSSNYLSSCPNCGRVISAERLYKGSVCSECLEEDREF). The Zn(2+) site is built by Cys13, Cys16, Cys31, and Cys34. ATP contacts are provided by residues Gln89 and 106–113 (APPGLGKT). Residues 93-296 (IIRVLRKESF…ALMGFRPGSS (204 aa)) form the Helicase ATP-binding domain. The DEAD box signature appears at 212-215 (DDVD). Residues 606-1233 (QKVKTVLFIV…DIYYEIKSIR (628 aa)) form a topoisomerase I region. The region spanning 610 to 774 (TVLFIVESPN…NIKRAEFHEV (165 aa)) is the Toprim domain. Glu616 contributes to the Mg(2+) binding site. The RG C-terminal-type; atypical zinc finger occupies 691–720 (IKKCINGHQFTDFEQGNQCPKCHTTQIILD). Residues Cys694, His698, Cys709, and Cys712 each contribute to the Zn(2+) site. Residue Asp743 participates in Mg(2+) binding. One can recognise a Topo IA-type catalytic domain in the interval 790–1233 (NVNLVKSQIV…DIYYEIKSIR (444 aa)). The active-site O-(5'-phospho-DNA)-tyrosine intermediate is the Tyr947.

This sequence in the N-terminal section; belongs to the DEAD box helicase family. DDVD subfamily. The protein in the C-terminal section; belongs to the type IA topoisomerase family. Monomer. Zn(2+) serves as cofactor. Requires Mg(2+) as cofactor.

It localises to the cytoplasm. The catalysed reaction is ATP + H2O = ADP + phosphate + H(+). In terms of biological role, modifies the topological state of DNA by introducing positive supercoils in an ATP-dependent process, increasing the linking number in steps of +1. Binds to single-stranded DNA, transiently cleaves and then rejoins the ends, introducing a positive supercoil in the process. The scissile phosphodiester is attacked by the catalytic tyrosine of the enzyme, resulting in the formation of a DNA-(5'-phosphotyrosyl)-enzyme intermediate. Probably involved in rewinding DNA strands in regions of the chromosome that have opened up to allow replication, transcription, DNA repair and/or for DNA protection. The sequence is that of Reverse gyrase 2 from Sulfurisphaera tokodaii (strain DSM 16993 / JCM 10545 / NBRC 100140 / 7) (Sulfolobus tokodaii).